Here is a 596-residue protein sequence, read N- to C-terminus: NADH-quinone oxidoreductase subunit C/D (596 aa).

The NADH dehydrogenase I subunit C stretch occupies residues 1 to 186; it reads MMNDNKYIHI…PAFTLTRKKE (186 aa). The NADH dehydrogenase I subunit D stretch occupies residues 210–596; the sequence is DFMFLNLGPN…IDFVMSDVDR (387 aa).

In the N-terminal section; belongs to the complex I 30 kDa subunit family. It in the C-terminal section; belongs to the complex I 49 kDa subunit family. NDH-1 is composed of 13 different subunits. Subunits NuoB, CD, E, F, and G constitute the peripheral sector of the complex.

Its subcellular location is the cell inner membrane. The catalysed reaction is a quinone + NADH + 5 H(+)(in) = a quinol + NAD(+) + 4 H(+)(out). Functionally, NDH-1 shuttles electrons from NADH, via FMN and iron-sulfur (Fe-S) centers, to quinones in the respiratory chain. The immediate electron acceptor for the enzyme in this species is believed to be ubiquinone. Couples the redox reaction to proton translocation (for every two electrons transferred, four hydrogen ions are translocated across the cytoplasmic membrane), and thus conserves the redox energy in a proton gradient. This Blochmanniella floridana protein is NADH-quinone oxidoreductase subunit C/D.